A 209-amino-acid chain; its full sequence is ATP phosphoribosyltransferase (209 aa).

This sequence belongs to the ATP phosphoribosyltransferase family. Short subfamily. Heteromultimer composed of HisG and HisZ subunits.

Its subcellular location is the cytoplasm. The enzyme catalyses 1-(5-phospho-beta-D-ribosyl)-ATP + diphosphate = 5-phospho-alpha-D-ribose 1-diphosphate + ATP. It participates in amino-acid biosynthesis; L-histidine biosynthesis; L-histidine from 5-phospho-alpha-D-ribose 1-diphosphate: step 1/9. In terms of biological role, catalyzes the condensation of ATP and 5-phosphoribose 1-diphosphate to form N'-(5'-phosphoribosyl)-ATP (PR-ATP). Has a crucial role in the pathway because the rate of histidine biosynthesis seems to be controlled primarily by regulation of HisG enzymatic activity. The sequence is that of ATP phosphoribosyltransferase from Caldicellulosiruptor saccharolyticus (strain ATCC 43494 / DSM 8903 / Tp8T 6331).